The following is a 507-amino-acid chain: Dihydrolipoyllysine-residue acetyltransferase component of pyruvate dehydrogenase complex, mitochondrial (507 aa).

Residues 77–153 (HNRVALPALS…PIGKLLCIIV (77 aa)) form the Lipoyl-binding domain. At lysine 118 the chain carries N6-lipoyllysine. Disordered regions lie at residues 168–223 (DGAS…VSAS) and 248–270 (RILASDLSQAPAKGATSTTTQAV). Positions 221-258 (SASPFAKKLAAENGLDLSGVSGSGPGGRILASDLSQAP) constitute a Peripheral subunit-binding (PSBD) domain. Active-site residues include histidine 480 and aspartate 484.

Belongs to the 2-oxoacid dehydrogenase family. Requires (R)-lipoate as cofactor.

Its subcellular location is the mitochondrion matrix. It carries out the reaction N(6)-[(R)-dihydrolipoyl]-L-lysyl-[protein] + acetyl-CoA = N(6)-[(R)-S(8)-acetyldihydrolipoyl]-L-lysyl-[protein] + CoA. Functionally, the pyruvate dehydrogenase complex catalyzes the overall conversion of pyruvate to acetyl-CoA and CO(2). It contains multiple copies of three enzymatic components: pyruvate dehydrogenase (E1), dihydrolipoamide acetyltransferase (E2) and lipoamide dehydrogenase (E3). The sequence is that of Dihydrolipoyllysine-residue acetyltransferase component of pyruvate dehydrogenase complex, mitochondrial from Caenorhabditis elegans.